The chain runs to 369 residues: Homoserine O-succinyltransferase (369 aa).

Residues 1–21 (MVRIVPSARRTRAPAKLDGRS) are disordered. The region spanning 86-350 (VVFVAGGISA…PFGHDAFLKE (265 aa)) is the AB hydrolase-1 domain. Residues 92 to 95 (GISA) form an important for substrate specificity region. Catalysis depends on S172, which acts as the Nucleophile. R233 is a substrate binding site. Catalysis depends on residues D314 and H344. D345 lines the substrate pocket.

It belongs to the AB hydrolase superfamily. MetX family. As to quaternary structure, homodimer.

Its subcellular location is the cytoplasm. The enzyme catalyses L-homoserine + succinyl-CoA = O-succinyl-L-homoserine + CoA. It functions in the pathway amino-acid biosynthesis; L-methionine biosynthesis via de novo pathway; O-succinyl-L-homoserine from L-homoserine: step 1/1. Transfers a succinyl group from succinyl-CoA to L-homoserine, forming succinyl-L-homoserine. The polypeptide is Homoserine O-succinyltransferase (Xanthomonas campestris pv. campestris (strain ATCC 33913 / DSM 3586 / NCPPB 528 / LMG 568 / P 25)).